A 205-amino-acid polypeptide reads, in one-letter code: Imidazole glycerol phosphate synthase subunit HisH (205 aa).

Residues 6–205 (RVGIIDHGSG…LLTRWLNQLS (200 aa)) enclose the Glutamine amidotransferase type-1 domain. The active-site Nucleophile is cysteine 84. Active-site residues include histidine 185 and glutamate 187.

Heterodimer of HisH and HisF.

Its subcellular location is the cytoplasm. It catalyses the reaction 5-[(5-phospho-1-deoxy-D-ribulos-1-ylimino)methylamino]-1-(5-phospho-beta-D-ribosyl)imidazole-4-carboxamide + L-glutamine = D-erythro-1-(imidazol-4-yl)glycerol 3-phosphate + 5-amino-1-(5-phospho-beta-D-ribosyl)imidazole-4-carboxamide + L-glutamate + H(+). The enzyme catalyses L-glutamine + H2O = L-glutamate + NH4(+). It participates in amino-acid biosynthesis; L-histidine biosynthesis; L-histidine from 5-phospho-alpha-D-ribose 1-diphosphate: step 5/9. Functionally, IGPS catalyzes the conversion of PRFAR and glutamine to IGP, AICAR and glutamate. The HisH subunit catalyzes the hydrolysis of glutamine to glutamate and ammonia as part of the synthesis of IGP and AICAR. The resulting ammonia molecule is channeled to the active site of HisF. The chain is Imidazole glycerol phosphate synthase subunit HisH from Cutibacterium acnes (strain DSM 16379 / KPA171202) (Propionibacterium acnes).